The chain runs to 93 residues: Putative aspartate aminotransferase (93 aa).

Belongs to the class-I pyridoxal-phosphate-dependent aminotransferase family. In terms of assembly, homodimer. It depends on pyridoxal 5'-phosphate as a cofactor.

The protein resides in the cytoplasm. It catalyses the reaction L-aspartate + 2-oxoglutarate = oxaloacetate + L-glutamate. The polypeptide is Putative aspartate aminotransferase (Methylorubrum extorquens (Methylobacterium dichloromethanicum)).